The sequence spans 484 residues: Sucrose-6-phosphate hydrolase (484 aa).

Substrate-binding positions include 48–51 (LLND), Gln67, 110–111 (YS), 168–169 (RD), and Glu223. The active site involves Asp51.

Belongs to the glycosyl hydrolase 32 family.

Its subcellular location is the cytoplasm. The enzyme catalyses Hydrolysis of terminal non-reducing beta-D-fructofuranoside residues in beta-D-fructofuranosides.. Its pathway is glycan biosynthesis; sucrose metabolism. Its function is as follows. Enables the bacterium to metabolize sucrose as a sole carbon source. This is Sucrose-6-phosphate hydrolase (scrB) from Vibrio alginolyticus.